The following is a 356-amino-acid chain: MDIVLEVCDTFLFDPLYATLLPAQASSFTANATANATLSSIRQEPTAYALPHASWQYEPATKYFSIEPSKYAYMSSWPRDDWRRQALTLYLITWLFGVCVYYLFAGLSYLLVFDKATFNHPRYLKHQIKLEMKQANIAFPIMAIFTVPWFLAEVRGYSKLYDTTEKGPGRWYDYLQIPFFIAFTDLCIYWIHRGLHHPMVYKHIHKPHHKWIMPTPFASHAFHPIDGYAQGLPYYIFPFLFPLSKIASVAFFVFVNIWTVLIHDGEYAHNSPIINGAACHTMHHLYFNYNYGQFTTLWDRLGGSYRKPNDELFKRELKMCQDEWNKQAKAVDMMVEQVEGENDRSYQGEPESKKVQ.

The next 3 helical transmembrane spans lie at 87 to 107, 134 to 154, and 171 to 191; these read LTLY…FAGL, QANI…LAEV, and WYDY…IYWI. Residues 179 to 303 enclose the Fatty acid hydroxylase domain; it reads FFIAFTDLCI…FTTLWDRLGG (125 aa). A Histidine box-1 motif is present at residues 192–196; the sequence is HRGLH. The Histidine box-2 motif lies at 205-209; the sequence is HKPHH. Residues 235–255 traverse the membrane as a helical segment; that stretch reads YIFPFLFPLSKIASVAFFVFV. The short motif at 280 to 284 is the Histidine box-3 element; sequence HTMHH.

This sequence belongs to the sterol desaturase family. The cofactor is Fe cation.

It localises to the endoplasmic reticulum membrane. It catalyses the reaction a Delta(7)-sterol + 2 Fe(II)-[cytochrome b5] + O2 + 2 H(+) = a Delta(5),Delta(7)-sterol + 2 Fe(III)-[cytochrome b5] + 2 H2O. The protein operates within steroid metabolism; ergosterol biosynthesis; ergosterol from zymosterol: step 3/5. Catalyzes the introduction of a C-5 double bond in the B ring of ergosterol. May contribute to the regulation of ergosterol biosynthesis. The polypeptide is Delta(7)-sterol 5(6)-desaturase (ERG3) (Leptosphaeria maculans (Blackleg fungus)).